Here is a 469-residue protein sequence, read N- to C-terminus: Cysteine protease ATG4D (469 aa).

Polar residues predominate over residues 1–29 (MNSVSPLATQYGSPKGSQQMENRSTQSGG). A disordered region spans residues 1–41 (MNSVSPLATQYGSPKGSQQMENRSTQSGGHEQRKMGHQDAT). Cysteine 131 (nucleophile) is an active-site residue. The tract at residues 169-191 (IRSSSPPSMPLSSLATGHSAGDY) is disordered. Residues 171-182 (SSSPPSMPLSSL) show a composition bias toward low complexity. Residues aspartate 356 and histidine 358 contribute to the active site. A disordered region spans residues 436 to 469 (QEYAEGPQSSSHPPVCRKKGPLVKRPSSDEFEFL).

This sequence belongs to the peptidase C54 family.

It is found in the cytoplasm. It catalyses the reaction [protein]-C-terminal L-amino acid-glycyl-phosphatidylethanolamide + H2O = [protein]-C-terminal L-amino acid-glycine + a 1,2-diacyl-sn-glycero-3-phosphoethanolamine. The enzyme catalyses [protein]-C-terminal L-amino acid-glycyl-phosphatidylserine + H2O = [protein]-C-terminal L-amino acid-glycine + a 1,2-diacyl-sn-glycero-3-phospho-L-serine. Functionally, cysteine protease that plays a key role in autophagy by mediating both proteolytic activation and delipidation of ATG8 family proteins. The protease activity is required for proteolytic activation of ATG8 family proteins to reveal a C-terminal glycine. Exposure of the glycine at the C-terminus is essential for ATG8 proteins conjugation to phosphatidylethanolamine (PE) and insertion to membranes, which is necessary for autophagy. In addition to the protease activity, also mediates delipidation of ATG8 family proteins. Catalyzes delipidation of PE-conjugated forms of ATG8 proteins during macroautophagy. Also involved in non-canonical autophagy, a parallel pathway involving conjugation of ATG8 proteins to single membranes at endolysosomal compartments, by catalyzing delipidation of ATG8 proteins conjugated to phosphatidylserine (PS). This chain is Cysteine protease ATG4D, found in Xenopus laevis (African clawed frog).